The chain runs to 692 residues: Proprotein convertase subtilisin/kexin type 9 (692 aa).

An N-terminal signal peptide occupies residues 1-30; the sequence is MGTVSSRRSWWPLPLLLLLLLLLGPAGARA. Residues 31–152 constitute a propeptide that is removed on maturation; it reads QEDEDGDYEE…IEEDSSVFAQ (122 aa). Tyr38 carries the sulfotyrosine modification. Ser47 carries the phosphoserine modification. The Inhibitor I9 domain occupies 77–149; that stretch reads TYVVVLKEET…VDYIEEDSSV (73 aa). One can recognise a Peptidase S8 domain in the interval 155-461; sequence PWNLERITPP…GWQLFCRTVW (307 aa). Catalysis depends on charge relay system residues Asp186 and His226. 2 disulfides stabilise this stretch: Cys223/Cys255 and Cys323/Cys358. The active-site Charge relay system is the Ser386. The tract at residues 450-692 is C-terminal domain; that stretch reads GAGWQLFCRT…HLAQASQELQ (243 aa). 3 disulfide bridges follow: Cys457/Cys527, Cys477/Cys526, and Cys486/Cys509. A glycan (N-linked (GlcNAc...) asparagine) is linked at Asn533. Cystine bridges form between Cys534-Cys601, Cys552-Cys600, Cys562-Cys588, Cys608-Cys679, Cys626-Cys678, and Cys635-Cys654. The residue at position 688 (Ser688) is a Phosphoserine.

This sequence belongs to the peptidase S8 family. As to quaternary structure, monomer. Can self-associate to form dimers and higher multimers which may have increased LDLR degrading activity. The precursor protein but not the mature protein may form multimers. Interacts with APOB, VLDLR, LRP8/APOER2 and BACE1. The full-length immature form (pro-PCSK9) interacts with SCNN1A, SCNN1B and SCNN1G. The pro-PCSK9 form (via C-terminal domain) interacts with LDLR. Interacts (via the C-terminal domain) with ANXA2 (via repeat Annexin 1); the interaction inhibits the degradation of LDLR. It depends on Ca(2+) as a cofactor. Cleavage by furin and PCSK5 generates a truncated inactive protein that is unable to induce LDLR degradation. Post-translationally, undergoes autocatalytic cleavage in the endoplasmic reticulum to release the propeptide from the N-terminus and the cleavage of the propeptide is strictly required for its maturation and activation. The cleaved propeptide however remains associated with the catalytic domain through non-covalent interactions, preventing potential substrates from accessing its active site. As a result, it is secreted from cells as a propeptide-containing, enzymatically inactive protein. In terms of processing, phosphorylation protects the propeptide against proteolysis.

It localises to the cytoplasm. Its subcellular location is the secreted. It is found in the endosome. The protein localises to the lysosome. The protein resides in the cell surface. It localises to the endoplasmic reticulum. Its subcellular location is the golgi apparatus. With respect to regulation, its proteolytic activity is autoinhibited by the non-covalent binding of the propeptide to the catalytic domain. Inhibited by EGTA. Functionally, crucial player in the regulation of plasma cholesterol homeostasis. Binds to low-density lipid receptor family members: low density lipoprotein receptor (LDLR), very low density lipoprotein receptor (VLDLR), apolipoprotein E receptor (LRP1/APOER) and apolipoprotein receptor 2 (LRP8/APOER2), and promotes their degradation in intracellular acidic compartments. Acts via a non-proteolytic mechanism to enhance the degradation of the hepatic LDLR through a clathrin LDLRAP1/ARH-mediated pathway. May prevent the recycling of LDLR from endosomes to the cell surface or direct it to lysosomes for degradation. Can induce ubiquitination of LDLR leading to its subsequent degradation. Inhibits intracellular degradation of APOB via the autophagosome/lysosome pathway in a LDLR-independent manner. Involved in the disposal of non-acetylated intermediates of BACE1 in the early secretory pathway. Inhibits epithelial Na(+) channel (ENaC)-mediated Na(+) absorption by reducing ENaC surface expression primarily by increasing its proteasomal degradation. Regulates neuronal apoptosis via modulation of LRP8/APOER2 levels and related anti-apoptotic signaling pathways. The sequence is that of Proprotein convertase subtilisin/kexin type 9 (PCSK9) from Pan paniscus (Pygmy chimpanzee).